A 232-amino-acid chain; its full sequence is 5'-methylthioadenosine/S-adenosylhomocysteine nucleosidase (232 aa).

The active-site Proton acceptor is Glu-14. Substrate-binding positions include Gly-80, Val-154, and 175–176 (ME). Catalysis depends on Asp-199, which acts as the Proton donor.

The protein belongs to the PNP/UDP phosphorylase family. MtnN subfamily.

The catalysed reaction is S-adenosyl-L-homocysteine + H2O = S-(5-deoxy-D-ribos-5-yl)-L-homocysteine + adenine. The enzyme catalyses S-methyl-5'-thioadenosine + H2O = 5-(methylsulfanyl)-D-ribose + adenine. It carries out the reaction 5'-deoxyadenosine + H2O = 5-deoxy-D-ribose + adenine. It participates in amino-acid biosynthesis; L-methionine biosynthesis via salvage pathway; S-methyl-5-thio-alpha-D-ribose 1-phosphate from S-methyl-5'-thioadenosine (hydrolase route): step 1/2. Its function is as follows. Catalyzes the irreversible cleavage of the glycosidic bond in both 5'-methylthioadenosine (MTA) and S-adenosylhomocysteine (SAH/AdoHcy) to adenine and the corresponding thioribose, 5'-methylthioribose and S-ribosylhomocysteine, respectively. Also cleaves 5'-deoxyadenosine, a toxic by-product of radical S-adenosylmethionine (SAM) enzymes, into 5-deoxyribose and adenine. This chain is 5'-methylthioadenosine/S-adenosylhomocysteine nucleosidase, found in Actinobacillus pleuropneumoniae serotype 5b (strain L20).